We begin with the raw amino-acid sequence, 260 residues long: Phytolongin Phyl2.1 (260 aa).

Positions 12–114 (CIAKGTVILA…LDNPTQHCLQ (103 aa)) constitute a Longin domain. The helical; Anchor for type IV membrane protein transmembrane segment at 231-251 (WIVLMFDLCICLVLFGIWLWI) threads the bilayer.

Belongs to the synaptobrevin family.

It is found in the membrane. Non-SNARE longin protein involved in membrane-trafficking machinery. This is Phytolongin Phyl2.1 from Arabidopsis thaliana (Mouse-ear cress).